We begin with the raw amino-acid sequence, 44 residues long: MHDIWVITTSPACFEILYKYCKQKGRARMGGLIVKIIRFNHASV.

This is an uncharacterized protein from Saccharomyces cerevisiae (strain ATCC 204508 / S288c) (Baker's yeast).